Reading from the N-terminus, the 313-residue chain is Endo-beta-N-acetylglucosaminidase H (313 aa).

The or 44 signal peptide spans 1–42 (MFTPVRRRVRTAALALSAAAALVLGSTAASGASATPSPAPAP). One can recognise a GH18 domain in the interval 51 to 307 (PTSVAYVEVN…SAFTRELYGS (257 aa)). The active-site Proton donor is the Glu-174.

It belongs to the glycosyl hydrolase 18 family.

It catalyses the reaction an N(4)-(oligosaccharide-(1-&gt;3)-[oligosaccharide-(1-&gt;6)]-beta-D-Man-(1-&gt;4)-beta-D-GlcNAc-(1-&gt;4)-alpha-D-GlcNAc)-L-asparaginyl-[protein] + H2O = an oligosaccharide-(1-&gt;3)-[oligosaccharide-(1-&gt;6)]-beta-D-Man-(1-&gt;4)-D-GlcNAc + N(4)-(N-acetyl-beta-D-glucosaminyl)-L-asparaginyl-[protein]. Functionally, cleaves asparagine-linked oligomannose and hybrid, but not complex, oligosaccharides from glycoproteins. The protein is Endo-beta-N-acetylglucosaminidase H of Streptomyces plicatus.